The sequence spans 389 residues: Na(+)/H(+) antiporter NhaA (389 aa).

The next 11 helical transmembrane spans lie at 14–34 (AGGI…NSPL), 59–79 (LLLW…GLEV), 95–115 (SLPS…YLLF), 124–144 (AGWA…MALL), 154–174 (VFLL…IALF), 177–197 (SDLS…LVGL), 213–233 (LILW…GVII), 261–281 (FLIL…NMSL), 290–310 (IGIA…FSFI), 328–348 (IAPV…IASL), and 363–383 (LGTL…LSKV).

It belongs to the NhaA Na(+)/H(+) (TC 2.A.33) antiporter family.

The protein localises to the cell inner membrane. The enzyme catalyses Na(+)(in) + 2 H(+)(out) = Na(+)(out) + 2 H(+)(in). Na(+)/H(+) antiporter that extrudes sodium in exchange for external protons. In Shewanella sp. (strain W3-18-1), this protein is Na(+)/H(+) antiporter NhaA.